The primary structure comprises 137 residues: Mobilization protein B (137 aa).

Interacts with MobA and MobC to form the relaxosome.

This protein is essential to promote the specific transfer of the plasmid in the presence of conjugative plasmids. This is Mobilization protein B (mobB) from Escherichia coli.